Consider the following 76-residue polypeptide: Alpha/kappa-conotoxin-like pl14.1 (76 aa).

The signal sequence occupies residues 1–27 (MPSVRSVTCCCLLWMMLSVQLVTPGSP). The propeptide occupies 28–39 (ATAQLSGQRTAR). 2 cysteine pairs are disulfide-bonded: cysteine 46–cysteine 61 and cysteine 50–cysteine 63. Residue asparagine 64 is modified to Asparagine amide. A propeptide spanning residues 65 to 76 (GKRDVVSSSMAV) is cleaved from the precursor.

The protein belongs to the conotoxin J superfamily. As to expression, expressed by the venom duct.

It is found in the secreted. Its function is as follows. Highly inhibits both nicotinic acetylcholine receptors (neuronal (alpha-3/beta-4) and muscular (alpha-1/beta-1/epsilon/delta) subtypes) and the voltage-gated potassium channel Kv1.6/KCNA6 subtype. In Conus planorbis (Planorbis cone), this protein is Alpha/kappa-conotoxin-like pl14.1.